The following is a 213-amino-acid chain: MAKVFFITGIDTDIGKTIATGWYAKKLMQQGASVITQKMIQTGCRGIAEDLLTHRKIQGIELTEEDKQGITCPYVFDYPCSPHLAAKLEQRTIERKKIETCTALLCEKYDYVLLEGAGGLCVPYNEEETTLDYLCQHQYPVILVTSGKLGSINHTLLSLQVLNSKRVSVHAVIYNLYPETDQVISQETQHFLRRYLEKYSPNTLFEVMDLISV.

ATP is bound at residue 13-18 (DIGKTI). Thr17 provides a ligand contact to Mg(2+). The active site involves Lys38. Residue Thr42 participates in substrate binding. Residues Asp50 and 115 to 118 (EGAG) contribute to the ATP site. Positions 50 and 115 each coordinate Mg(2+).

It belongs to the dethiobiotin synthetase family. Homodimer. The cofactor is Mg(2+).

The protein resides in the cytoplasm. It carries out the reaction (7R,8S)-7,8-diammoniononanoate + CO2 + ATP = (4R,5S)-dethiobiotin + ADP + phosphate + 3 H(+). It participates in cofactor biosynthesis; biotin biosynthesis; biotin from 7,8-diaminononanoate: step 1/2. Functionally, catalyzes a mechanistically unusual reaction, the ATP-dependent insertion of CO2 between the N7 and N8 nitrogen atoms of 7,8-diaminopelargonic acid (DAPA, also called 7,8-diammoniononanoate) to form a ureido ring. This chain is ATP-dependent dethiobiotin synthetase BioD 2, found in Pasteurella multocida (strain Pm70).